Consider the following 190-residue polypeptide: Imidazoleglycerol-phosphate dehydratase (190 aa).

The protein belongs to the imidazoleglycerol-phosphate dehydratase family.

The protein resides in the cytoplasm. It carries out the reaction D-erythro-1-(imidazol-4-yl)glycerol 3-phosphate = 3-(imidazol-4-yl)-2-oxopropyl phosphate + H2O. Its pathway is amino-acid biosynthesis; L-histidine biosynthesis; L-histidine from 5-phospho-alpha-D-ribose 1-diphosphate: step 6/9. The chain is Imidazoleglycerol-phosphate dehydratase from Methanococcus maripaludis (strain C7 / ATCC BAA-1331).